Consider the following 394-residue polypeptide: L-lactate dehydrogenase (394 aa).

The 380-residue stretch at 1–380 (MIISAASDYR…SRDSLVQNAE (380 aa)) folds into the FMN hydroxy acid dehydrogenase domain. Tyr-24 contributes to the substrate binding site. Residues Ser-106 and Gln-127 each contribute to the FMN site. Tyr-129 lines the substrate pocket. Thr-155 contacts FMN. Arg-164 serves as a coordination point for substrate. Lys-251 is an FMN binding site. Residue His-275 is the Proton acceptor of the active site. Arg-278 contacts substrate. FMN is bound at residue 306–330 (DSGIRNGLDVVRMIALGADSVLLGR).

The protein belongs to the FMN-dependent alpha-hydroxy acid dehydrogenase family. FMN is required as a cofactor.

Its subcellular location is the cell inner membrane. It catalyses the reaction (S)-lactate + A = pyruvate + AH2. In terms of biological role, catalyzes the conversion of L-lactate to pyruvate. Is coupled to the respiratory chain. The sequence is that of L-lactate dehydrogenase from Klebsiella pneumoniae subsp. pneumoniae (strain ATCC 700721 / MGH 78578).